The following is a 667-amino-acid chain: Single-minded homolog 2 (667 aa).

Positions 1 to 53 (MKEKSKNAAKTRREKENGEFYELAKLLPLPSAITSQLDKASIIRLTTSYLKMR) constitute a bHLH domain. PAS domains are found at residues 77 to 149 (AKEL…LHHH) and 218 to 288 (PPSA…LVKG). The PAC domain occupies 292–335 (TKYYRLLSKRGGWVWVQSYATVVHNSRSSRPHCIVSVNYVLTEI). The 332-residue stretch at 336–667 (EYKELQLSLE…GASVIITNGR (332 aa)) folds into the Single-minded C-terminal domain. 3 disordered regions span residues 356–389 (WRTALSTSQETRKLVKPKNTKMKTKLRTNPYPPQ), 409–428 (ASPPASAAAPPELQPHSESS), and 500–520 (SSSSPAKNPPEPPANTARHSL). The Nuclear localization signal signature appears at 367-386 (RKLVKPKNTKMKTKLRTNPY). Basic residues predominate over residues 369–381 (LVKPKNTKMKTKL). Residues 409–419 (ASPPASAAAPP) show a composition bias toward low complexity.

As to quaternary structure, efficient DNA binding requires dimerization with another bHLH protein. Heterodimer of SIM2 and ARNT.

It is found in the nucleus. Its function is as follows. Transcription factor that may be a master gene of CNS development in cooperation with Arnt. It may have pleiotropic effects in the tissues expressed during development. This chain is Single-minded homolog 2 (SIM2), found in Homo sapiens (Human).